Consider the following 921-residue polypeptide: Inter-alpha-trypsin inhibitor heavy chain H4 (921 aa).

Positions 1 to 27 are cleaved as a signal peptide; it reads MKTLSPTGYGLLLVLPLLLAVLQSTTA. A VIT domain is found at 28–146; it reads HKNDINIYSL…KVTFELVYEE (119 aa). N-linked (GlcNAc...) asparagine glycans are attached at residues Asn80, Asn205, and Asn242. Positions 270–428 constitute a VWFA domain; sequence PKNVIFVIDT…YAFLEKMALE (159 aa). Residues Asn513 and Asn577 are each glycosylated (N-linked (GlcNAc...) asparagine). The segment at 591–646 is disordered; it reads KPEGQEQSQVAEKPVENGNRQGNTHSGHSSFQFHSVGDRTSRLTGGSSVDPVFSHR. Residues 608 to 623 are compositionally biased toward polar residues; sequence GNRQGNTHSGHSSFQF. An O-linked (GalNAc...) threonine glycan is attached at Thr712. The cysteines at positions 738 and 916 are disulfide-linked.

This sequence belongs to the ITIH family. In terms of assembly, interacts (via C-terminus) with DNAJC1 (via SANT 2 domain). In terms of processing, appears to be both N- and O-glycosylated. Cleaved by plasma kallikrein to yield 55- and 25-kDa fragments. In terms of tissue distribution, liver specific.

Its subcellular location is the secreted. In terms of biological role, type II acute-phase protein (APP) involved in inflammatory responses to trauma. May also play a role in liver development or regeneration. This is Inter-alpha-trypsin inhibitor heavy chain H4 (ITIH4) from Sus scrofa (Pig).